Consider the following 339-residue polypeptide: Methionyl-tRNA formyltransferase (339 aa).

110–113 contributes to the (6S)-5,6,7,8-tetrahydrofolate binding site; the sequence is SLLP.

The protein belongs to the Fmt family.

The catalysed reaction is L-methionyl-tRNA(fMet) + (6R)-10-formyltetrahydrofolate = N-formyl-L-methionyl-tRNA(fMet) + (6S)-5,6,7,8-tetrahydrofolate + H(+). Functionally, attaches a formyl group to the free amino group of methionyl-tRNA(fMet). The formyl group appears to play a dual role in the initiator identity of N-formylmethionyl-tRNA by promoting its recognition by IF2 and preventing the misappropriation of this tRNA by the elongation apparatus. This Prochlorococcus marinus (strain MIT 9211) protein is Methionyl-tRNA formyltransferase.